Consider the following 915-residue polypeptide: Metabotropic glutamate receptor 7 (915 aa).

The signal sequence occupies residues 1–34 (MVQLGKLLRVLTLMKFPCCVLEVLLCVLAAAARG). At 35–590 (QEMYAPHSIR…IIKLEWHSPW (556 aa)) the chain is on the extracellular side. Cys67 and Cys109 form a disulfide bridge. N-linked (GlcNAc...) asparagine glycosylation is present at Asn98. L-glutamate-binding positions include Ser159, 180–182 (AST), Tyr230, and Asp314. Intrachain disulfides connect Cys249/Cys541, Cys374/Cys390, Cys430/Cys437, Cys523/Cys542, Cys527/Cys545, Cys548/Cys560, and Cys563/Cys576. Lys407 provides a ligand contact to L-glutamate. 2 N-linked (GlcNAc...) asparagine glycosylation sites follow: Asn458 and Asn486. Asn572 is a glycosylation site (N-linked (GlcNAc...) asparagine). Residues 591 to 615 (AVIPVFLAMLGIIATIFVMATFIRY) traverse the membrane as a helical segment. Residues 616-627 (NDTPIVRASGRE) lie on the Cytoplasmic side of the membrane. Residues 628-648 (LSYVLLTGIFLCYIITFLMIA) traverse the membrane as a helical segment. Residues 649-654 (KPDVAV) lie on the Extracellular side of the membrane. Residues 655 to 675 (CSFRRVFLGLGMCISYAALLT) form a helical membrane-spanning segment. Residues 676–702 (KTNRIYRIFEQGKKSVTAPRLISPTSQ) lie on the Cytoplasmic side of the membrane. Residues 703–723 (LAITSSLISVQLLGVFIWFGV) traverse the membrane as a helical segment. Over 724–753 (DPPNIIIDYDEHKTMNPEQARGVLKCDITD) the chain is Extracellular. Residues 754–775 (LQIICSLGYSILLMVTCTVYAI) form a helical membrane-spanning segment. The Cytoplasmic portion of the chain corresponds to 776–788 (KTRGVPENFNEAK). Residues 789-810 (PIGFTMYTTCIVWLAFIPIFFG) traverse the membrane as a helical segment. Over 811–825 (TAQSAEKLYIQTTTL) the chain is Extracellular. Residues 826-850 (TISMNLSASVALGMLYMPKVYIIIF) form a helical membrane-spanning segment. Over 851 to 915 (HPELNVQKRK…KYVSYNNLVI (65 aa)) the chain is Cytoplasmic. A disordered region spans residues 874–895 (SRLSHKPSDRPNGEAKTELCEN). The span at 879–892 (KPSDRPNGEAKTEL) shows a compositional bias: basic and acidic residues. Phosphoserine is present on Ser900.

Belongs to the G-protein coupled receptor 3 family. As to quaternary structure, homodimer. Interacts with PICK1.

The protein localises to the cell membrane. In terms of biological role, G-protein coupled receptor activated by glutamate that regulates axon outgrowth through the MAPK-cAMP-PKA signaling pathway during neuronal development. Ligand binding causes a conformation change that triggers signaling via guanine nucleotide-binding proteins (G proteins) and modulates the activity of downstream effectors, such as adenylate cyclase that it inhibits. This is Metabotropic glutamate receptor 7 (Grm7) from Mus musculus (Mouse).